A 450-amino-acid chain; its full sequence is Phosphoglucosamine mutase (450 aa).

Ser-104 serves as the catalytic Phosphoserine intermediate. Mg(2+) contacts are provided by Ser-104, Asp-241, Asp-243, and Asp-245. Ser-104 carries the post-translational modification Phosphoserine.

The protein belongs to the phosphohexose mutase family. Mg(2+) serves as cofactor. In terms of processing, activated by phosphorylation.

It carries out the reaction alpha-D-glucosamine 1-phosphate = D-glucosamine 6-phosphate. Catalyzes the conversion of glucosamine-6-phosphate to glucosamine-1-phosphate. In Renibacterium salmoninarum (strain ATCC 33209 / DSM 20767 / JCM 11484 / NBRC 15589 / NCIMB 2235), this protein is Phosphoglucosamine mutase.